We begin with the raw amino-acid sequence, 178 residues long: Large ribosomal subunit protein bL35m (178 aa).

This sequence belongs to the bacterial ribosomal protein bL35 family.

It is found in the mitochondrion. The chain is Large ribosomal subunit protein bL35m (mRpL35) from Drosophila melanogaster (Fruit fly).